A 149-amino-acid polypeptide reads, in one-letter code: D-aminoacyl-tRNA deacylase (149 aa).

Residues 137–138 carry the Gly-cisPro motif, important for rejection of L-amino acids motif; the sequence is GP.

The protein belongs to the DTD family. In terms of assembly, homodimer.

The protein resides in the cytoplasm. It catalyses the reaction glycyl-tRNA(Ala) + H2O = tRNA(Ala) + glycine + H(+). The enzyme catalyses a D-aminoacyl-tRNA + H2O = a tRNA + a D-alpha-amino acid + H(+). In terms of biological role, an aminoacyl-tRNA editing enzyme that deacylates mischarged D-aminoacyl-tRNAs. Also deacylates mischarged glycyl-tRNA(Ala), protecting cells against glycine mischarging by AlaRS. Acts via tRNA-based rather than protein-based catalysis; rejects L-amino acids rather than detecting D-amino acids in the active site. By recycling D-aminoacyl-tRNA to D-amino acids and free tRNA molecules, this enzyme counteracts the toxicity associated with the formation of D-aminoacyl-tRNA entities in vivo and helps enforce protein L-homochirality. In Halothermothrix orenii (strain H 168 / OCM 544 / DSM 9562), this protein is D-aminoacyl-tRNA deacylase.